Consider the following 800-residue polypeptide: Putative antiporter subunit mnhA2 (800 aa).

Helical transmembrane passes span 1 to 21 (MSLV…LFTL), 29 to 49 (VAGY…IMKI), 78 to 98 (GLSL…FFYA), 109 to 129 (LPRF…IVIA), 133 to 153 (ILMY…ISYW), 167 to 187 (FMIT…LYII), 209 to 229 (FIPM…QFPF), 241 to 261 (TPVS…FLLF), 272 to 292 (VYIY…SLTA), 300 to 320 (GILA…VGLG), 336 to 356 (ILVL…KCAL), 387 to 407 (IVML…GFLS), 424 to 444 (YGFV…ILTF), 472 to 492 (PWLF…IFFV), 528 to 548 (VNLP…LALV), 595 to 615 (IMIT…TVGF), 627 to 647 (GPLE…LIFI), 651 to 671 (LTMV…FIAM), 676 to 696 (LALT…VSFS), 712 to 732 (TFKI…IFVA), and 768 to 788 (LDTM…YTLL).

Belongs to the CPA3 antiporters (TC 2.A.63) subunit A family. As to quaternary structure, may form a heterooligomeric complex that consists of seven subunits: mnhA2, mnhB2, mnhC2, mnhD2, mnhE2, mnhF2 and mnhG2.

The protein resides in the cell membrane. This chain is Putative antiporter subunit mnhA2 (mnhA2), found in Staphylococcus epidermidis (strain ATCC 12228 / FDA PCI 1200).